Consider the following 298-residue polypeptide: Max-like protein X (298 aa).

The tract at residues 1-63 (MTEPGASPED…PRGCREDSSH (63 aa)) is disordered. Residue S7 is modified to Phosphoserine. The segment covering 28-37 (GRARARRGAG) has biased composition (basic residues). Residues S45, S48, S74, S77, and S98 each carry the phosphoserine modification. Positions 91 to 145 (SVVSRANSIGSTSASSVPNTDDEDSDYHQEAYKESYKDRRRRAHTQAEQKRRDAI) are disordered. Residues 94–109 (SRANSIGSTSASSVPN) show a composition bias toward polar residues. 2 stretches are compositionally biased toward basic and acidic residues: residues 116–127 (DYHQEAYKESYK) and 135–145 (TQAEQKRRDAI). Residues 129–187 (RRRRAHTQAEQKRRDAIKRGYDDLQTIVPTCQQQDFSIGSQKLSKAIVLQKTIDYIQFL) form the bHLH domain. The tract at residues 140-160 (KRRDAIKRGYDDLQTIVPTCQ) is leucine-zipper.

Efficient DNA binding requires dimerization with another bHLH protein. Binds DNA as a heterodimer with MAD1, MAD4, MNT, WBSCR14 and MLXIP. Can also bind DNA as a homodimer. Expressed in all tissues tested, including spleen, thymus, prostate, ovary, intestine, colon, peripheral blood leukocyte, heart, liver, skeletal muscle and kidney. Lower levels of expression in testis, brain, placenta and lung.

The protein localises to the cytoplasm. Its subcellular location is the nucleus. In terms of biological role, transcription regulator. Forms a sequence-specific DNA-binding protein complex with MAD1, MAD4, MNT, WBSCR14 and MLXIP which recognizes the core sequence 5'-CACGTG-3'. The TCFL4-MAD1, TCFL4-MAD4, TCFL4-WBSCR14 complexes are transcriptional repressors. Plays a role in transcriptional activation of glycolytic target genes. Involved in glucose-responsive gene regulation. In Homo sapiens (Human), this protein is Max-like protein X (MLX).